The chain runs to 524 residues: 2-isopropylmalate synthase (524 aa).

In terms of domain architecture, Pyruvate carboxyltransferase spans 12-274; sequence VIIFDTTLRD…WNRIETTMLT (263 aa). 4 residues coordinate Mn(2+): aspartate 21, histidine 209, histidine 211, and asparagine 245. Residues 398 to 524 form a regulatory domain region; it reads KLMSLTVIAG…EDAPAVAVAG (127 aa).

It belongs to the alpha-IPM synthase/homocitrate synthase family. LeuA type 1 subfamily. Homodimer. Mn(2+) serves as cofactor.

It is found in the cytoplasm. The catalysed reaction is 3-methyl-2-oxobutanoate + acetyl-CoA + H2O = (2S)-2-isopropylmalate + CoA + H(+). Its pathway is amino-acid biosynthesis; L-leucine biosynthesis; L-leucine from 3-methyl-2-oxobutanoate: step 1/4. Its function is as follows. Catalyzes the condensation of the acetyl group of acetyl-CoA with 3-methyl-2-oxobutanoate (2-ketoisovalerate) to form 3-carboxy-3-hydroxy-4-methylpentanoate (2-isopropylmalate). This chain is 2-isopropylmalate synthase, found in Rhodopseudomonas palustris (strain ATCC BAA-98 / CGA009).